We begin with the raw amino-acid sequence, 283 residues long: Short-chain dehydrogenase cctT (283 aa).

Residues 1-20 form the signal peptide; sequence MLKTVLITGCSHGGLGAAMA. NADP(+)-binding residues include Ile-7, Thr-33, Lys-39, Glu-55, and Asn-83. A glycan (N-linked (GlcNAc...) asparagine) is linked at Asn-131. Ser-133 serves as the catalytic Proton donor. 4 residues coordinate NADP(+): Tyr-147, Arg-151, Val-180, and Thr-182. Catalysis depends on Tyr-147, which acts as the Proton acceptor.

Belongs to the short-chain dehydrogenases/reductases (SDR) family.

Its function is as follows. Short-chain dehydrogenase; part of the gene cluster that mediates the biosynthesis of the mycotoxin cyclochlorotine, a hepatotoxic and carcinogenic cyclic chlorinated pentapeptide. The function of cctT within the pathway, if any, remains undetermined. The NRPS cctN initially catalyzes the condensation of L-serine (Ser), Pro, L-2-aminobutyrate (2Abu), Ser, and beta-Phe in this order to produce isocyclotine. After the dichlorination of Pro2 catalyzed by cctP2 to produce isocyclochlorotine, the cctO-mediated transacylation of isocyclochlorotine can furnish cyclochlorotine. The subsequent hydroxylation of cyclochlorotine by cctR yields hydroxycyclochlorotine as the final product. CctP1 probably acts as a phenylalanine aminomutase and provides the uncommon building block beta-Phe. Furthermore, 2Abu can be synthesized from threonine by one of the threonine dehydratases and transaminases localized outside of the cluster. The functions of the remaining proteins encoded by the cluster, cctM and cctT, have not been identified yet. The protein is Short-chain dehydrogenase cctT of Talaromyces islandicus (Penicillium islandicum).